Here is a 197-residue protein sequence, read N- to C-terminus: Dephospho-CoA kinase (197 aa).

The 196-residue stretch at 2 to 197 (IIGLTGGIAS…GAIKDLANLV (196 aa)) folds into the DPCK domain. Position 10 to 15 (10 to 15 (ASGKST)) interacts with ATP.

This sequence belongs to the CoaE family.

Its subcellular location is the cytoplasm. It catalyses the reaction 3'-dephospho-CoA + ATP = ADP + CoA + H(+). It functions in the pathway cofactor biosynthesis; coenzyme A biosynthesis; CoA from (R)-pantothenate: step 5/5. Its function is as follows. Catalyzes the phosphorylation of the 3'-hydroxyl group of dephosphocoenzyme A to form coenzyme A. This is Dephospho-CoA kinase from Streptococcus thermophilus (strain ATCC BAA-250 / LMG 18311).